Reading from the N-terminus, the 343-residue chain is Uroporphyrinogen decarboxylase (343 aa).

Residues 23-27 (RQAGR), Asp73, Tyr149, Thr204, and His320 contribute to the substrate site.

This sequence belongs to the uroporphyrinogen decarboxylase family. In terms of assembly, homodimer.

The protein resides in the cytoplasm. The enzyme catalyses uroporphyrinogen III + 4 H(+) = coproporphyrinogen III + 4 CO2. It functions in the pathway porphyrin-containing compound metabolism; protoporphyrin-IX biosynthesis; coproporphyrinogen-III from 5-aminolevulinate: step 4/4. Catalyzes the decarboxylation of four acetate groups of uroporphyrinogen-III to yield coproporphyrinogen-III. This Bradyrhizobium sp. (strain BTAi1 / ATCC BAA-1182) protein is Uroporphyrinogen decarboxylase.